Consider the following 384-residue polypeptide: 8-amino-7-oxononanoate synthase (384 aa).

Residue arginine 21 participates in substrate binding. 108 to 109 is a binding site for pyridoxal 5'-phosphate; that stretch reads GF. Residue histidine 133 coordinates substrate. Positions 179, 207, and 233 each coordinate pyridoxal 5'-phosphate. Lysine 236 bears the N6-(pyridoxal phosphate)lysine mark. Threonine 352 contributes to the substrate binding site.

It belongs to the class-II pyridoxal-phosphate-dependent aminotransferase family. BioF subfamily. In terms of assembly, homodimer. It depends on pyridoxal 5'-phosphate as a cofactor.

It catalyses the reaction 6-carboxyhexanoyl-[ACP] + L-alanine + H(+) = (8S)-8-amino-7-oxononanoate + holo-[ACP] + CO2. It participates in cofactor biosynthesis; biotin biosynthesis. Catalyzes the decarboxylative condensation of pimeloyl-[acyl-carrier protein] and L-alanine to produce 8-amino-7-oxononanoate (AON), [acyl-carrier protein], and carbon dioxide. The sequence is that of 8-amino-7-oxononanoate synthase from Escherichia coli O9:H4 (strain HS).